A 399-amino-acid chain; its full sequence is Protein translocase subunit SecD (399 aa).

The next 6 membrane-spanning stretches (helical) occupy residues 7–27, 239–259, 262–282, 286–306, 329–351, and 357–381; these read IKTA…LTFP, VIGA…LGLV, IALL…NATL, GVAG…LIFA, ALRA…FYFG, and GFAV…RTLL.

Belongs to the SecD/SecF family. SecD subfamily. Forms a complex with SecF. Part of the essential Sec protein translocation apparatus which comprises SecA, SecYEG and auxiliary proteins SecDF. Other proteins may also be involved.

It is found in the cell inner membrane. Its function is as follows. Part of the Sec protein translocase complex. Interacts with the SecYEG preprotein conducting channel. SecDF uses the proton motive force (PMF) to complete protein translocation after the ATP-dependent function of SecA. The protein is Protein translocase subunit SecD of Dictyoglomus turgidum (strain DSM 6724 / Z-1310).